A 264-amino-acid polypeptide reads, in one-letter code: NAD kinase (264 aa).

Asp45 functions as the Proton acceptor in the catalytic mechanism. NAD(+)-binding positions include 45 to 46 (DG), His50, 121 to 122 (NE), Arg147, Asp149, Ala184, and Gln224.

Belongs to the NAD kinase family. The cofactor is a divalent metal cation.

It localises to the cytoplasm. It carries out the reaction NAD(+) + ATP = ADP + NADP(+) + H(+). Functionally, involved in the regulation of the intracellular balance of NAD and NADP, and is a key enzyme in the biosynthesis of NADP. Catalyzes specifically the phosphorylation on 2'-hydroxyl of the adenosine moiety of NAD to yield NADP. The chain is NAD kinase from Lysinibacillus sphaericus (strain C3-41).